The following is a 272-amino-acid chain: Low-density lipoprotein receptor class A domain-containing protein 2 (272 aa).

Residues 1-25 (MEACCLLQLPQRLLLLGAAALTATA) form the signal peptide. Residues 26–233 (LETADLAELC…GSTDAHTSRS (208 aa)) lie on the Extracellular side of the membrane. An N-linked (GlcNAc...) asparagine glycan is attached at Asn97. The LDL-receptor class A domain occupies 172–214 (PCGAYFRCQNGRCIPSSLVCDPWGMDNCGDGSDQGSWSPADCR). Intrachain disulfides connect Cys173–Cys184, Cys179–Cys199, and Cys191–Cys213. The tract at residues 202–272 (GSDQGSWSPA…QDAALEGSTE (71 aa)) is disordered. Residues 220–236 (PSQTGSTDAHTSRSLTP) show a composition bias toward polar residues. The chain crosses the membrane as a helical span at residues 234–250 (LTPSPALGSAGSLWIAA). Residues 251–272 (ERSSPAGRDPTRQDAALEGSTE) are Cytoplasmic-facing.

This sequence belongs to the LDLR family.

The protein resides in the membrane. The sequence is that of Low-density lipoprotein receptor class A domain-containing protein 2 (LDLRAD2) from Homo sapiens (Human).